Consider the following 733-residue polypeptide: Cyclic nucleotide-gated channel (733 aa).

2 disordered regions span residues 1–33 (MSTA…PTAS) and 67–95 (PNGN…IEVP). Over 1 to 125 (MSTAEPAPDP…PSTDNFYYWT (125 aa)) the chain is Cytoplasmic. Positions 12-25 (NPSTSGLAPTTNGI) are enriched in polar residues. The chain crosses the membrane as a helical span at residues 126 to 148 (CVVTVAYIYNLLFVIARQVFNDL). At 149–197 (IGPSSQSLCRFYNGTLNSTTQVECTYNMLTNMKEMPTYSQYPDLGWSKY) the chain is on the extracellular side. The chain crosses the membrane as a helical span at residues 198–217 (WHFRMLWVFFDLLMDCVYLI). Residues 218-251 (DTFLNYRMGYMDQGLVVREAEKVTKAYWQSKQYR) lie on the Cytoplasmic side of the membrane. A helical membrane pass occupies residues 252 to 265 (IDGISLIPLDYILG). Residues 266-276 (WPIPYINWRGL) are Extracellular-facing. Residues 277–287 (PILRLNRLIRY) form a helical membrane-spanning segment. Over 288 to 308 (KRVRNCLERTETRSSMPNAFR) the chain is Cytoplasmic. A helical membrane pass occupies residues 309–331 (VVVVVWYIVIIIHWNACLYFWIS). Topologically, residues 332–362 (EWIGLGTDAWVYGHLNKQSLPDDITDTLLRR) are extracellular. 2 helical membrane passes run 363-385 (YVYS…SPVR) and 386-411 (NIEY…GNVG). The interval 376–379 (TIGE) is selectivity filter. Glu-379 contacts Na(+). Residues 412–733 (SMISNMSAAR…TGTESESLLK (322 aa)) lie on the Cytoplasmic side of the membrane. A C-linker region spans residues 419–496 (AARTEFQNKM…TLRKVRIFQD (78 aa)). The tract at residues 493–607 (IFQDCEAGLL…ALREYPDARK (115 aa)) is cyclic nucleotide-binding domain. Position 559 (Gly-559) interacts with 3',5'-cyclic GMP. Glu-560 contributes to the 3',5'-cyclic AMP binding site. Positions 562, 575, 576, 619, and 620 each coordinate 3',5'-cyclic GMP. A 3',5'-cyclic AMP-binding site is contributed by Arg-575. The segment at 694–733 (SIDGGDISTDGVDERVRPPRLRQTKTIDLPTGTESESLLK) is disordered.

The protein belongs to the cyclic nucleotide-gated cation channel (TC 1.A.1.5) family. In terms of assembly, homotetramer. In terms of tissue distribution, expressed at the sensory endings of thermosensory, gustatory, and olfactory neurons.

It localises to the cell membrane. Its subcellular location is the cell projection. It is found in the cilium. The enzyme catalyses Ca(2+)(in) = Ca(2+)(out). It carries out the reaction Na(+)(in) = Na(+)(out). It catalyses the reaction K(+)(in) = K(+)(out). Pore-forming subunit of the cyclic nucleotide-gated channel. Required for normal thermosensation and chemosensation sensory behavior. Required, downstream of receptor-type guanylate cyclase gcy-9, for CO2-mediated responses in BAG neurons. Required, downstream of receptor-type guanylate cyclase gcy-14, for alkaline pH-mediated responses in ASE-left (ASEL) neurons. Involved in the development of ASJ sensory neuron axon during late larval stages and in the maintenance of normal axon morphology in the adult. Regulates dauer formation. Required for the calcium flux to the cytoplasm in the ASJ sensory neurons upon the onset and removal of a nitric oxide (NO) stimulus, thereby promoting the ASJ-mediated behavioral avoidance response to NO-producing organisms like P.aeruginosa. In ASI and ASJ sensory neurons, controls behavioral response to P.aeruginosa by up-regulating the transcription of daf-7, a member of the TGF-beta family. In AWB and AWC sensory neurons, mediates the recognition of food odors which subsequently allows for the detection of preferred food sources. In AWC neurons, acts to promote expression of srsx-3, a member of the GPCR family. Binding to cGMP results in conformational changes at the hydrophobic gate that converts the protein from an inactive closed state to an active open state. This is Cyclic nucleotide-gated channel (tax-4) from Caenorhabditis elegans.